The primary structure comprises 229 residues: Glucose-induced degradation protein 8-B homolog (229 aa).

The 33-residue stretch at 26–58 folds into the LisH domain; the sequence is QRADMNRLIMNYLVTEGFKEAAEKFRMESGIEP. Positions 64–121 constitute a CTLH domain; the sequence is SLDERIKIREMVLKGQIQEAIALINSLHPELLDTNRYLYFHLQQQHLIELIRLRETEA.

As to quaternary structure, identified in the CTLH complex that contains at least MAEA, RMND5A (or alternatively its paralog RMND5B), GID8, WDR26, and RANBP9 and/or RANBP10. Interacts with CTNNB1.

The protein localises to the cytoplasm. The protein resides in the nucleus. Functionally, core component of the CTLH E3 ubiquitin-protein ligase complex that selectively accepts ubiquitin from UBE2H and mediates ubiquitination and subsequent proteasomal degradation of target proteins. Acts as a positive regulator of Wnt signaling pathway by promoting beta-catenin (CTNNB1) nuclear accumulation. Required for normal Wnt signaling and normal dorsoventral patterning during embryogenesis. The chain is Glucose-induced degradation protein 8-B homolog (gid8b) from Danio rerio (Zebrafish).